A 211-amino-acid chain; its full sequence is Phosphatidylglycerophosphatase C (211 aa).

The Cytoplasmic segment spans residues 1-33 (MATHERRVVFFDLDGTLHQQDMFGSFLRYLLRR). Residues 34 to 54 (QPLNALLVLPLLPIIAIALLI) traverse the membrane as a helical segment. The Periplasmic portion of the chain corresponds to 55-211 (KGRAARWPMS…TPRGELQQLE (157 aa)).

The cofactor is Mg(2+).

It is found in the cell inner membrane. It carries out the reaction a 1,2-diacyl-sn-glycero-3-phospho-(1'-sn-glycero-3'-phosphate) + H2O = a 1,2-diacyl-sn-glycero-3-phospho-(1'-sn-glycerol) + phosphate. It participates in phospholipid metabolism; phosphatidylglycerol biosynthesis; phosphatidylglycerol from CDP-diacylglycerol: step 2/2. In terms of biological role, lipid phosphatase which dephosphorylates phosphatidylglycerophosphate (PGP) to phosphatidylglycerol (PG). The polypeptide is Phosphatidylglycerophosphatase C (pgpC) (Escherichia coli (strain K12)).